Reading from the N-terminus, the 184-residue chain is Peptide deformylase (184 aa).

2 residues coordinate Fe cation: Cys111 and His154. Residue Glu155 is part of the active site. Position 158 (His158) interacts with Fe cation.

This sequence belongs to the polypeptide deformylase family. The cofactor is Fe(2+).

The enzyme catalyses N-terminal N-formyl-L-methionyl-[peptide] + H2O = N-terminal L-methionyl-[peptide] + formate. In terms of biological role, removes the formyl group from the N-terminal Met of newly synthesized proteins. Requires at least a dipeptide for an efficient rate of reaction. N-terminal L-methionine is a prerequisite for activity but the enzyme has broad specificity at other positions. The protein is Peptide deformylase of Lactobacillus helveticus (strain DPC 4571).